Here is a 292-residue protein sequence, read N- to C-terminus: Undecaprenyl-diphosphatase (292 aa).

The next 7 helical transmembrane spans lie at 1-21 (MSLV…FLPV), 46-66 (FVTI…RADI), 90-110 (LGWY…LLEH), 114-134 (ALGN…LLAA), 192-212 (FLLS…STVP), 225-245 (VVGT…LLAW), and 253-273 (VFVV…LSGV).

Belongs to the UppP family.

It is found in the cell inner membrane. It carries out the reaction di-trans,octa-cis-undecaprenyl diphosphate + H2O = di-trans,octa-cis-undecaprenyl phosphate + phosphate + H(+). In terms of biological role, catalyzes the dephosphorylation of undecaprenyl diphosphate (UPP). Confers resistance to bacitracin. The sequence is that of Undecaprenyl-diphosphatase from Anaeromyxobacter sp. (strain K).